A 351-amino-acid chain; its full sequence is Phosphoribosylformylglycinamidine cyclo-ligase (351 aa).

The protein belongs to the AIR synthase family.

It localises to the cytoplasm. It catalyses the reaction 2-formamido-N(1)-(5-O-phospho-beta-D-ribosyl)acetamidine + ATP = 5-amino-1-(5-phospho-beta-D-ribosyl)imidazole + ADP + phosphate + H(+). It functions in the pathway purine metabolism; IMP biosynthesis via de novo pathway; 5-amino-1-(5-phospho-D-ribosyl)imidazole from N(2)-formyl-N(1)-(5-phospho-D-ribosyl)glycinamide: step 2/2. This Burkholderia lata (strain ATCC 17760 / DSM 23089 / LMG 22485 / NCIMB 9086 / R18194 / 383) protein is Phosphoribosylformylglycinamidine cyclo-ligase.